A 516-amino-acid polypeptide reads, in one-letter code: uncharacterized protein (516 aa).

Residues 31–185 (ACIFLSKFDM…LDKFDIFEKF (155 aa)) form the uDENN domain. The region spanning 211–365 (HLVEYLPYWT…LEVYEKLILG (155 aa)) is the cDENN domain. One can recognise a dDENN domain in the interval 367-513 (LQEDASTNAT…DISNLPECLG (147 aa)). 2 S-palmitoyl cysteine lipidation sites follow: C511 and C516.

In terms of processing, palmitoylated by AKR1.

It localises to the lipid droplet. May be involved in lipid metabolism. This is an uncharacterized protein from Saccharomyces cerevisiae (strain ATCC 204508 / S288c) (Baker's yeast).